We begin with the raw amino-acid sequence, 604 residues long: Phosphomethylpyrimidine synthase (604 aa).

Substrate contacts are provided by residues asparagine 218, methionine 247, tyrosine 276, histidine 312, 332–334 (SRG), 373–376 (DGLR), and glutamate 412. Residue histidine 416 coordinates Zn(2+). Position 439 (tyrosine 439) interacts with substrate. Histidine 480 provides a ligand contact to Zn(2+). The [4Fe-4S] cluster site is built by cysteine 560, cysteine 563, and cysteine 568.

It belongs to the ThiC family. Homodimer. [4Fe-4S] cluster serves as cofactor.

The enzyme catalyses 5-amino-1-(5-phospho-beta-D-ribosyl)imidazole + S-adenosyl-L-methionine = 4-amino-2-methyl-5-(phosphooxymethyl)pyrimidine + CO + 5'-deoxyadenosine + formate + L-methionine + 3 H(+). The protein operates within cofactor biosynthesis; thiamine diphosphate biosynthesis. Functionally, catalyzes the synthesis of the hydroxymethylpyrimidine phosphate (HMP-P) moiety of thiamine from aminoimidazole ribotide (AIR) in a radical S-adenosyl-L-methionine (SAM)-dependent reaction. The protein is Phosphomethylpyrimidine synthase of Zymomonas mobilis subsp. mobilis (strain ATCC 31821 / ZM4 / CP4).